Here is a 163-residue protein sequence, read N- to C-terminus: Sorting nexin-3 (163 aa).

The 124-residue stretch at 39–162 folds into the PX domain; it reads VEVRDPRTHF…VRFLQDEVFN (124 aa). A 1,2-diacyl-sn-glycero-3-phospho-(1D-myo-inositol-3-phosphate) is bound by residues arginine 82, serine 84, lysine 113, arginine 119, and arginine 128.

This sequence belongs to the sorting nexin family.

It is found in the cytoplasm. Its subcellular location is the golgi apparatus membrane. The protein localises to the prevacuolar compartment membrane. In terms of biological role, required for retention of late Golgi membrane proteins. Component of the retrieval machinery that functions by direct interaction with the cytosolic tails of certain TGN membrane proteins during the sorting/budding process at the prevacuolar compartment. Binds phosphatidylinositol 3-phosphate (PtdIns(P3)). The polypeptide is Sorting nexin-3 (SNX3) (Eremothecium gossypii (strain ATCC 10895 / CBS 109.51 / FGSC 9923 / NRRL Y-1056) (Yeast)).